We begin with the raw amino-acid sequence, 38 residues long: Cytochrome b6-f complex subunit 5 (38 aa).

A helical membrane pass occupies residues 5–25 (LLSGIVLGSIPITLAGSFVTA).

This sequence belongs to the PetG family. In terms of assembly, the 4 large subunits of the cytochrome b6-f complex are cytochrome b6, subunit IV (17 kDa polypeptide, PetD), cytochrome f and the Rieske protein, while the 4 small subunits are PetG, PetL, PetM and PetN. The complex functions as a dimer.

Its subcellular location is the plastid. The protein localises to the chloroplast thylakoid membrane. Functionally, component of the cytochrome b6-f complex, which mediates electron transfer between photosystem II (PSII) and photosystem I (PSI), cyclic electron flow around PSI, and state transitions. PetG is required for either the stability or assembly of the cytochrome b6-f complex. In Huperzia lucidula (Shining clubmoss), this protein is Cytochrome b6-f complex subunit 5.